A 310-amino-acid polypeptide reads, in one-letter code: Isoflavone reductase homolog A622 (310 aa).

NADP(+) contacts are provided by residues 13-19 (GGTGYIG), Arg-38, and Lys-47. Lys-135 functions as the Proton acceptor in the catalytic mechanism. Position 139 (Arg-139) interacts with NADP(+).

This sequence belongs to the NmrA-type oxidoreductase family. Isoflavone reductase subfamily. As to quaternary structure, monomer. As to expression, expressed in roots and stems.

The protein localises to the cytoplasm. It participates in alkaloid biosynthesis; nicotine biosynthesis. In terms of biological role, NADPH-binding protein. Involved in the biosynthesis of pyridine alkaloid natural products, leading mainly to the production of anabasine, anatabine, nicotine and nornicotine, effective deterrents against herbivores with antiparasitic and pesticide properties (neurotoxins); nornicotine serves as the precursor in the synthesis of the carcinogen compound N'-nitrosonornicotine (NNN). Reductase involved in a late step of tobacco alkaloid biosynthesis. Triggers either the formation of a nicotinic acid-derived precursor or the final condensation reaction of tobacco alkaloids. This chain is Isoflavone reductase homolog A622, found in Nicotiana sylvestris (Wood tobacco).